The following is a 130-amino-acid chain: Small ribosomal subunit protein uS11c (130 aa).

The protein belongs to the universal ribosomal protein uS11 family. As to quaternary structure, part of the 30S ribosomal subunit.

It is found in the plastid. The protein resides in the chloroplast. The sequence is that of Small ribosomal subunit protein uS11c from Psilotum nudum (Whisk fern).